Reading from the N-terminus, the 316-residue chain is Protease HtpX homolog (316 aa).

The helical transmembrane segment at 16 to 36 threads the bilayer; sequence LFMALGFTIGGTGGAMIALVV. Residue histidine 130 coordinates Zn(2+). The active site involves glutamate 131. Residue histidine 134 coordinates Zn(2+). The next 2 membrane-spanning stretches (helical) occupy residues 145-165 and 174-194; these read MTATIAGAISMLANFGMFFGA and LATILAVFVAPFAAMIVQMAI. Glutamate 199 contributes to the Zn(2+) binding site. Residues 285–316 form a disordered region; that stretch reads PNFAALSERRGSVSSVPRTRRRSSALDPNGRG.

This sequence belongs to the peptidase M48B family. Zn(2+) is required as a cofactor.

The protein resides in the cell inner membrane. This Rhizorhabdus wittichii (strain DSM 6014 / CCUG 31198 / JCM 15750 / NBRC 105917 / EY 4224 / RW1) (Sphingomonas wittichii) protein is Protease HtpX homolog.